The sequence spans 330 residues: Cathepsin S (330 aa).

An N-terminal signal peptide occupies residues 1–17 (MAVLGAPGVLCDNGATA). The propeptide at 18-112 (ERPTLDHHWD…GTLKSSSNQT (95 aa)) is activation peptide. 2 N-linked (GlcNAc...) asparagine glycosylation sites follow: asparagine 100 and asparagine 110. 4 disulfide bridges follow: cysteine 124-cysteine 222, cysteine 134-cysteine 179, cysteine 168-cysteine 211, and cysteine 271-cysteine 319. The active site involves cysteine 137. Active-site residues include histidine 277 and asparagine 297.

The protein belongs to the peptidase C1 family. In terms of assembly, monomer. As to expression, highest levels occur in the ileum followed by spleen, brain, thyroid, ovary and uterus. Low levels are found in the liver, kidney, jejunum and lung with lowest levels in the heart.

The protein resides in the lysosome. The protein localises to the secreted. It localises to the cytoplasmic vesicle. Its subcellular location is the phagosome. The catalysed reaction is Similar to cathepsin L, but with much less activity on Z-Phe-Arg-|-NHMec, and more activity on the Z-Val-Val-Arg-|-Xaa compound.. In terms of biological role, thiol protease. Key protease responsible for the removal of the invariant chain from MHC class II molecules and MHC class II antigen presentation. The bond-specificity of this proteinase is in part similar to the specificities of cathepsin L. This Rattus norvegicus (Rat) protein is Cathepsin S (Ctss).